The primary structure comprises 148 residues: Large ribosomal subunit protein uL15 (148 aa).

A compositionally biased stretch (basic and acidic residues) spans 1 to 10; that stretch reads MQLHNLEYKK. Positions 1-42 are disordered; the sequence is MQLHNLEYKKGSRNHKEKRVGRGHGSGLGKTSGRGQDGQKAR. The segment covering 11–22 has biased composition (basic residues); sequence GSRNHKEKRVGR. A compositionally biased stretch (gly residues) spans 23-36; it reads GHGSGLGKTSGRGQ.

This sequence belongs to the universal ribosomal protein uL15 family. As to quaternary structure, part of the 50S ribosomal subunit.

Functionally, binds to the 23S rRNA. In Ureaplasma urealyticum serovar 10 (strain ATCC 33699 / Western), this protein is Large ribosomal subunit protein uL15.